The sequence spans 612 residues: Zinc metalloproteinase nas-36 (612 aa).

Positions 1–16 are cleaved as a signal peptide; the sequence is MLLLVLLFVFISATNA. The N-linked (GlcNAc...) asparagine glycan is linked to Asn-15. The propeptide occupies 17–122; that stretch reads SDVGRRELEK…KSKPNVRGRR (106 aa). The 198-residue stretch at 123 to 320 folds into the Peptidase M12A domain; it reads SFDASPESKW…IETINKAYCS (198 aa). Residue Asn-163 is glycosylated (N-linked (GlcNAc...) asparagine). Cystine bridges form between Cys-166–Cys-319, Cys-190–Cys-209, Cys-329–Cys-343, Cys-345–Cys-354, Cys-365–Cys-394, Cys-515–Cys-546, Cys-519–Cys-551, and Cys-531–Cys-536. His-217 contacts Zn(2+). Residue Glu-218 is part of the active site. Zn(2+) contacts are provided by His-221 and His-227. Residues 320–355 form the EGF-like domain; it reads SDRCSGSNDCKNGGYPHPKQCDTCLCPNGLSGPKCE. A CUB domain is found at 365-478; that stretch reads CGGKIVVKEE…VGFKLQARAT (114 aa). Residues 503–552 form the TSP type-1 domain; it reads TDQWAEWGSWSQCSRSCGGCGIMSRVRVCRTKQCKGRRQEFSTCNLKACP.

It depends on Zn(2+) as a cofactor.

It localises to the secreted. Its activity is regulated as follows. Inhibited by 1,10-phenanthroline. Functionally, metalloprotease. Involved in molting, a process during larval stages in which a new cuticle is formed and the old cuticle is shed. In Haemonchus contortus (Barber pole worm), this protein is Zinc metalloproteinase nas-36.